The following is a 333-amino-acid chain: Mitochondrial fission regulator 1 (333 aa).

Serine 119 carries the post-translational modification Phosphoserine. The segment covering 286-307 (YRSDSQDEVEKGVPKSESEATS) has biased composition (basic and acidic residues). The disordered stretch occupies residues 286 to 315 (YRSDSQDEVEKGVPKSESEATSERVLFGPH).

The protein belongs to the MTFR1 family.

It is found in the mitochondrion. In terms of biological role, may play a role in mitochondrial aerobic respiration. May also regulate mitochondrial organization and fission. The sequence is that of Mitochondrial fission regulator 1 (MTFR1) from Pongo abelii (Sumatran orangutan).